The sequence spans 372 residues: Putative 8-amino-7-oxononanoate synthase (372 aa).

Arg20 serves as a coordination point for substrate. 94 to 95 (GY) serves as a coordination point for pyridoxal 5'-phosphate. His119 is a substrate binding site. Pyridoxal 5'-phosphate-binding positions include Ser167, 192 to 195 (DDAH), and 223 to 226 (TLSK). At Lys226 the chain carries N6-(pyridoxal phosphate)lysine. Position 337 (Thr337) interacts with substrate.

It belongs to the class-II pyridoxal-phosphate-dependent aminotransferase family. BioF subfamily. In terms of assembly, homodimer. Requires pyridoxal 5'-phosphate as cofactor.

It catalyses the reaction 6-carboxyhexanoyl-[ACP] + L-alanine + H(+) = (8S)-8-amino-7-oxononanoate + holo-[ACP] + CO2. It functions in the pathway cofactor biosynthesis; biotin biosynthesis. Its function is as follows. Catalyzes the decarboxylative condensation of pimeloyl-[acyl-carrier protein] and L-alanine to produce 8-amino-7-oxononanoate (AON), [acyl-carrier protein], and carbon dioxide. In Methanocaldococcus jannaschii (strain ATCC 43067 / DSM 2661 / JAL-1 / JCM 10045 / NBRC 100440) (Methanococcus jannaschii), this protein is Putative 8-amino-7-oxononanoate synthase (bioF).